A 135-amino-acid polypeptide reads, in one-letter code: Classical arabinogalactan protein 4 (135 aa).

Residues 1-21 (MGSKIVQVFLMLALFATSALA) form the signal peptide. Glutamine 22 carries the post-translational modification Pyrrolidone carboxylic acid. The segment at 22 to 112 (QAPAPTPTAT…PSDASPAPSA (91 aa)) is disordered. 4-hydroxyproline is present on residues proline 24, proline 26, proline 28, proline 32, proline 33, proline 34, proline 37, proline 38, and proline 39. Residues proline 24, proline 26, proline 28, proline 32, proline 33, proline 34, proline 37, proline 38, and proline 39 are each glycosylated (O-linked (Ara...) hydroxyproline). Pro residues predominate over residues 25–76 (APTPTATPPPATPPPVATPPPVATPPPAATPAPATPPPAATPAPATTPPSVA). Over residues 96 to 112 (SPSSAPGPSDASPAPSA) the composition is skewed to low complexity. Serine 111 carries the GPI-anchor amidated serine lipid modification. The propeptide at 112–135 (AAFSNKAFFAGTAFAAIMYAAVLA) is removed in mature form.

It belongs to the classical AGP family. O-glycosylated on hydroxyprolines; noncontiguous hydroxylproline residues are glycosylated with arabinogalactan. As to expression, highly expressed in roots, flowers and leaves.

It is found in the cell membrane. Proteoglycan that seems to be implicated in diverse developmental roles such as differentiation, cell-cell recognition, embryogenesis and programmed cell death. The protein is Classical arabinogalactan protein 4 (AGP4) of Arabidopsis thaliana (Mouse-ear cress).